We begin with the raw amino-acid sequence, 21 residues long: Major outer membrane protein (21 aa).

In terms of assembly, disulfide bond interactions within and between MOMP molecules and other components form high molecular-weight oligomers.

The protein localises to the cell outer membrane. Its function is as follows. Structural rigidity of the outer membrane of elementary bodies and porin forming, permitting diffusion of solutes through the intracellular reticulate body membrane. This Actinobacillus equuli protein is Major outer membrane protein.